The following is a 474-amino-acid chain: Aspartyl/glutamyl-tRNA(Asn/Gln) amidotransferase subunit B (474 aa).

The protein belongs to the GatB/GatE family. GatB subfamily. In terms of assembly, heterotrimer of A, B and C subunits.

It carries out the reaction L-glutamyl-tRNA(Gln) + L-glutamine + ATP + H2O = L-glutaminyl-tRNA(Gln) + L-glutamate + ADP + phosphate + H(+). The catalysed reaction is L-aspartyl-tRNA(Asn) + L-glutamine + ATP + H2O = L-asparaginyl-tRNA(Asn) + L-glutamate + ADP + phosphate + 2 H(+). In terms of biological role, allows the formation of correctly charged Asn-tRNA(Asn) or Gln-tRNA(Gln) through the transamidation of misacylated Asp-tRNA(Asn) or Glu-tRNA(Gln) in organisms which lack either or both of asparaginyl-tRNA or glutaminyl-tRNA synthetases. The reaction takes place in the presence of glutamine and ATP through an activated phospho-Asp-tRNA(Asn) or phospho-Glu-tRNA(Gln). The chain is Aspartyl/glutamyl-tRNA(Asn/Gln) amidotransferase subunit B from Methanospirillum hungatei JF-1 (strain ATCC 27890 / DSM 864 / NBRC 100397 / JF-1).